Reading from the N-terminus, the 448-residue chain is Trigger factor (448 aa).

Residues 172–257 (GDRVTVDFVG…MKKIEWPHMP (86 aa)) form the PPIase FKBP-type domain.

Belongs to the FKBP-type PPIase family. Tig subfamily.

The protein resides in the cytoplasm. The enzyme catalyses [protein]-peptidylproline (omega=180) = [protein]-peptidylproline (omega=0). Involved in protein export. Acts as a chaperone by maintaining the newly synthesized protein in an open conformation. Functions as a peptidyl-prolyl cis-trans isomerase. In Burkholderia vietnamiensis (strain G4 / LMG 22486) (Burkholderia cepacia (strain R1808)), this protein is Trigger factor.